The sequence spans 66 residues: MPKFKTHRASAKRFKRTGNGGLKRSHAYTSHRFHGKTKKQRRQLRKSGMVSNSDMRRIRQMLSGLK.

Composition is skewed to basic residues over residues 1 to 16 and 23 to 45; these read MPKF…RFKR and KRSH…RQLR. Residues 1 to 66 form a disordered region; the sequence is MPKFKTHRAS…RIRQMLSGLK (66 aa).

The protein belongs to the bacterial ribosomal protein bL35 family.

The sequence is that of Large ribosomal subunit protein bL35 from Latilactobacillus sakei subsp. sakei (strain 23K) (Lactobacillus sakei subsp. sakei).